The following is a 318-amino-acid chain: Protein FAM228A (318 aa).

The disordered stretch occupies residues Ser259–Asp297.

This sequence belongs to the FAM228 family.

The sequence is that of Protein FAM228A (FAM228A) from Bos taurus (Bovine).